The following is a 257-amino-acid chain: 3-deoxy-manno-octulosonate cytidylyltransferase (257 aa).

Belongs to the KdsB family.

It is found in the cytoplasm. The catalysed reaction is 3-deoxy-alpha-D-manno-oct-2-ulosonate + CTP = CMP-3-deoxy-beta-D-manno-octulosonate + diphosphate. The protein operates within nucleotide-sugar biosynthesis; CMP-3-deoxy-D-manno-octulosonate biosynthesis; CMP-3-deoxy-D-manno-octulosonate from 3-deoxy-D-manno-octulosonate and CTP: step 1/1. It functions in the pathway bacterial outer membrane biogenesis; lipopolysaccharide biosynthesis. Its function is as follows. Activates KDO (a required 8-carbon sugar) for incorporation into bacterial lipopolysaccharide in Gram-negative bacteria. The chain is 3-deoxy-manno-octulosonate cytidylyltransferase from Albidiferax ferrireducens (strain ATCC BAA-621 / DSM 15236 / T118) (Rhodoferax ferrireducens).